A 546-amino-acid polypeptide reads, in one-letter code: Medium-chain-fatty-acid--CoA ligase (546 aa).

Thr185 is a Mg(2+) binding site. Residues Trp235 and Thr329 each contribute to the ATP site. Mg(2+) is bound at residue Glu330. Residues Asp417, Lys434, Lys438, and Trp443 each coordinate ATP.

The protein belongs to the ATP-dependent AMP-binding enzyme family.

The protein resides in the cytoplasm. It catalyses the reaction a medium-chain fatty acid + ATP + CoA = a medium-chain fatty acyl-CoA + AMP + diphosphate. It functions in the pathway lipid metabolism; fatty acid metabolism. This is Medium-chain-fatty-acid--CoA ligase from Ectopseudomonas oleovorans (Pseudomonas oleovorans).